A 464-amino-acid chain; its full sequence is ATP synthase subunit beta (464 aa).

153-160 (GGAGVGKT) serves as a coordination point for ATP.

This sequence belongs to the ATPase alpha/beta chains family. In terms of assembly, F-type ATPases have 2 components, CF(1) - the catalytic core - and CF(0) - the membrane proton channel. CF(1) has five subunits: alpha(3), beta(3), gamma(1), delta(1), epsilon(1). CF(0) has three main subunits: a(1), b(2) and c(9-12). The alpha and beta chains form an alternating ring which encloses part of the gamma chain. CF(1) is attached to CF(0) by a central stalk formed by the gamma and epsilon chains, while a peripheral stalk is formed by the delta and b chains.

The protein resides in the cell membrane. The enzyme catalyses ATP + H2O + 4 H(+)(in) = ADP + phosphate + 5 H(+)(out). Functionally, produces ATP from ADP in the presence of a proton gradient across the membrane. The catalytic sites are hosted primarily by the beta subunits. The protein is ATP synthase subunit beta of Alkaliphilus metalliredigens (strain QYMF).